The sequence spans 304 residues: Ribokinase (304 aa).

Substrate contacts are provided by residues asparagine 12 to aspartate 14, glycine 41 to asparagine 45, and glutamate 142. ATP-binding positions include asparagine 186 and threonine 222–glycine 227. Aspartate 248 and threonine 250 together coordinate K(+). ATP is bound by residues glycine 253–aspartate 254 and asparagine 279. Aspartate 254 provides a ligand contact to substrate. Aspartate 254 functions as the Proton acceptor in the catalytic mechanism. Residues threonine 285, lysine 288, glycine 290, and serine 294 each coordinate K(+).

This sequence belongs to the carbohydrate kinase PfkB family. Ribokinase subfamily. As to quaternary structure, homodimer. Mg(2+) serves as cofactor.

Its subcellular location is the cytoplasm. It catalyses the reaction D-ribose + ATP = D-ribose 5-phosphate + ADP + H(+). It functions in the pathway carbohydrate metabolism; D-ribose degradation; D-ribose 5-phosphate from beta-D-ribopyranose: step 2/2. With respect to regulation, activated by a monovalent cation that binds near, but not in, the active site. The most likely occupant of the site in vivo is potassium. Ion binding induces a conformational change that may alter substrate affinity. Functionally, catalyzes the phosphorylation of ribose at O-5 in a reaction requiring ATP and magnesium. The resulting D-ribose-5-phosphate can then be used either for sythesis of nucleotides, histidine, and tryptophan, or as a component of the pentose phosphate pathway. This is Ribokinase from Staphylococcus aureus (strain COL).